We begin with the raw amino-acid sequence, 187 residues long: GTP cyclohydrolase 1 (187 aa).

Zn(2+)-binding residues include Cys-76, His-79, and Cys-148.

The protein belongs to the GTP cyclohydrolase I family. As to quaternary structure, toroid-shaped homodecamer, composed of two pentamers of five dimers.

It catalyses the reaction GTP + H2O = 7,8-dihydroneopterin 3'-triphosphate + formate + H(+). The protein operates within cofactor biosynthesis; 7,8-dihydroneopterin triphosphate biosynthesis; 7,8-dihydroneopterin triphosphate from GTP: step 1/1. The protein is GTP cyclohydrolase 1 of Streptococcus agalactiae serotype V (strain ATCC BAA-611 / 2603 V/R).